A 444-amino-acid polypeptide reads, in one-letter code: Phosphoglucosamine mutase (444 aa).

Ser-102 serves as the catalytic Phosphoserine intermediate. Mg(2+) is bound by residues Ser-102, Asp-241, Asp-243, and Asp-245. At Ser-102 the chain carries Phosphoserine.

The protein belongs to the phosphohexose mutase family. It depends on Mg(2+) as a cofactor. Activated by phosphorylation.

It carries out the reaction alpha-D-glucosamine 1-phosphate = D-glucosamine 6-phosphate. Its function is as follows. Catalyzes the conversion of glucosamine-6-phosphate to glucosamine-1-phosphate. This Actinobacillus pleuropneumoniae serotype 7 (strain AP76) protein is Phosphoglucosamine mutase.